The chain runs to 1511 residues: DNA-directed RNA polymerase subunit beta' (1511 aa).

Cysteine 75, cysteine 77, cysteine 90, and cysteine 93 together coordinate Zn(2+). Mg(2+) is bound by residues aspartate 474, aspartate 476, and aspartate 478. Zn(2+)-binding residues include cysteine 804, cysteine 878, cysteine 885, and cysteine 888.

This sequence belongs to the RNA polymerase beta' chain family. In terms of assembly, the RNAP catalytic core consists of 2 alpha, 1 beta, 1 beta' and 1 omega subunit. When a sigma factor is associated with the core the holoenzyme is formed, which can initiate transcription. Mg(2+) serves as cofactor. It depends on Zn(2+) as a cofactor.

It catalyses the reaction RNA(n) + a ribonucleoside 5'-triphosphate = RNA(n+1) + diphosphate. In terms of biological role, DNA-dependent RNA polymerase catalyzes the transcription of DNA into RNA using the four ribonucleoside triphosphates as substrates. In Aliarcobacter butzleri (strain RM4018) (Arcobacter butzleri), this protein is DNA-directed RNA polymerase subunit beta'.